Consider the following 291-residue polypeptide: Small ribosomal subunit protein uS2 (291 aa).

This sequence belongs to the universal ribosomal protein uS2 family.

The protein is Small ribosomal subunit protein uS2 of Lawsonia intracellularis (strain PHE/MN1-00).